The chain runs to 519 residues: 2-isopropylmalate synthase (519 aa).

In terms of domain architecture, Pyruvate carboxyltransferase spans 12-274 (IRIFDTTLRD…DTSIHTSRIV (263 aa)). D21, H209, H211, and N245 together coordinate Mn(2+). A regulatory domain region spans residues 396–519 (RLASMTISDV…MQNKQNTALA (124 aa)).

Belongs to the alpha-IPM synthase/homocitrate synthase family. LeuA type 1 subfamily. In terms of assembly, homodimer. Requires Mn(2+) as cofactor.

It localises to the cytoplasm. The catalysed reaction is 3-methyl-2-oxobutanoate + acetyl-CoA + H2O = (2S)-2-isopropylmalate + CoA + H(+). It functions in the pathway amino-acid biosynthesis; L-leucine biosynthesis; L-leucine from 3-methyl-2-oxobutanoate: step 1/4. Its function is as follows. Catalyzes the condensation of the acetyl group of acetyl-CoA with 3-methyl-2-oxobutanoate (2-ketoisovalerate) to form 3-carboxy-3-hydroxy-4-methylpentanoate (2-isopropylmalate). This Xylella fastidiosa (strain M23) protein is 2-isopropylmalate synthase.